Consider the following 99-residue polypeptide: Citrate lyase acyl carrier protein (99 aa).

Ser-14 is modified (O-(phosphoribosyl dephospho-coenzyme A)serine).

Belongs to the CitD family. As to quaternary structure, oligomer with a subunit composition of (alpha,beta,gamma)6.

The protein resides in the cytoplasm. Functionally, covalent carrier of the coenzyme of citrate lyase. This chain is Citrate lyase acyl carrier protein, found in Edwardsiella ictaluri (strain 93-146).